Here is a 604-residue protein sequence, read N- to C-terminus: Aspartate--tRNA(Asp/Asn) ligase (604 aa).

Glu175 serves as a coordination point for L-aspartate. An aspartate region spans residues 199–202; that stretch reads QQFK. L-aspartate contacts are provided by Arg221 and His456. An ATP-binding site is contributed by 221–223; sequence RDE. Glu496 serves as a coordination point for ATP. Arg503 provides a ligand contact to L-aspartate. 548-551 contributes to the ATP binding site; that stretch reads GVDR.

Belongs to the class-II aminoacyl-tRNA synthetase family. Type 1 subfamily. In terms of assembly, homodimer.

It localises to the cytoplasm. It catalyses the reaction tRNA(Asx) + L-aspartate + ATP = L-aspartyl-tRNA(Asx) + AMP + diphosphate. Functionally, aspartyl-tRNA synthetase with relaxed tRNA specificity since it is able to aspartylate not only its cognate tRNA(Asp) but also tRNA(Asn). Reaction proceeds in two steps: L-aspartate is first activated by ATP to form Asp-AMP and then transferred to the acceptor end of tRNA(Asp/Asn). The sequence is that of Aspartate--tRNA(Asp/Asn) ligase from Methylobacterium sp. (strain 4-46).